Here is a 143-residue protein sequence, read N- to C-terminus: Hypoxic response protein 1 (143 aa).

CBS domains lie at Met-8–Pro-65 and Leu-73–Phe-131. Cys-14 and Cys-39 are disulfide-bonded. 2 residues coordinate Zn(2+): His-97 and His-122.

Homodimer.

Its subcellular location is the secreted. In terms of biological role, unlike some other CBS-domain containing proteins does not seem to bind AMP. This chain is Hypoxic response protein 1 (hrp1), found in Mycobacterium tuberculosis (strain CDC 1551 / Oshkosh).